Reading from the N-terminus, the 564-residue chain is uncharacterized protein (564 aa).

The span at 1-17 (MRRPSTASLTRTPSRAS) shows a compositional bias: polar residues. The disordered stretch occupies residues 1 to 564 (MRRPSTASLT…ASTPSSEVIS (564 aa)). Low complexity-rich tracts occupy residues 79–97 (SPRT…RASP) and 114–134 (SPTG…ASPT). Positions 153-168 (RSPSTASLTRTPSRAS) are enriched in polar residues. Residues 170-179 (TRWPPRASPT) show a composition bias toward low complexity. The segment covering 250 to 271 (GSPPRASPMTPPRASPRTPPRA) has biased composition (pro residues). The span at 272–299 (SPTTTPSRASLTRTPSWASPTTTPSRAS) shows a compositional bias: low complexity. Polar residues predominate over residues 318 to 351 (PTGTPSRASPTGTPSRASLTGSPSRASLTGTPSR). A compositionally biased stretch (low complexity) spans 378–416 (RASLTGTSSTASLTRTPSRASLTRTQSSSSLTRTPSMAS). Positions 467-564 (SRASLTRTPS…ASTPSSEVIS (98 aa)) are enriched in polar residues.

This is an uncharacterized protein from Homo sapiens (Human).